A 161-amino-acid polypeptide reads, in one-letter code: Phosphopantetheine adenylyltransferase (161 aa).

Position 10 (Thr-10) interacts with substrate. Residues 10–11 (TF) and His-18 contribute to the ATP site. Substrate is bound by residues Lys-42, Met-74, and Arg-88. Residues 89 to 91 (GLR), Glu-99, and 124 to 130 (WSFISSS) each bind ATP.

It belongs to the bacterial CoaD family. As to quaternary structure, homohexamer. The cofactor is Mg(2+).

It is found in the cytoplasm. The enzyme catalyses (R)-4'-phosphopantetheine + ATP + H(+) = 3'-dephospho-CoA + diphosphate. It functions in the pathway cofactor biosynthesis; coenzyme A biosynthesis; CoA from (R)-pantothenate: step 4/5. Reversibly transfers an adenylyl group from ATP to 4'-phosphopantetheine, yielding dephospho-CoA (dPCoA) and pyrophosphate. The protein is Phosphopantetheine adenylyltransferase of Edwardsiella ictaluri (strain 93-146).